Consider the following 107-residue polypeptide: Probable monothiol glutaredoxin 2 (107 aa).

One can recognise a Glutaredoxin domain in the interval 7-107; the sequence is LEFIQNAIKK…LEKMLKDVVV (101 aa). Position 24 (Lys24) interacts with glutathione. Residue Cys32 participates in [2Fe-2S] cluster binding. Residues Arg61, Phe73, and 86–87 contribute to the glutathione site; that span reads CD.

It belongs to the glutaredoxin family. Monothiol subfamily.

The polypeptide is Probable monothiol glutaredoxin 2 (grxC2) (Rickettsia prowazekii (strain Madrid E)).